Consider the following 858-residue polypeptide: Putative glutamate--cysteine ligase 2-3 (858 aa).

Residues 1–372 (MSDARNVAVG…RDVPPAGASL (372 aa)) are carboxylate-amine ligase. The unknown stretch occupies residues 373–858 (GVAPAVSAPD…GSKDTWIPRR (486 aa)).

This sequence in the N-terminal section; belongs to the glutamate--cysteine ligase type 2 family. YbdK subfamily.

It carries out the reaction L-cysteine + L-glutamate + ATP = gamma-L-glutamyl-L-cysteine + ADP + phosphate + H(+). In terms of biological role, ATP-dependent carboxylate-amine ligase which exhibits weak glutamate--cysteine ligase activity. In Frankia alni (strain DSM 45986 / CECT 9034 / ACN14a), this protein is Putative glutamate--cysteine ligase 2-3.